A 327-amino-acid polypeptide reads, in one-letter code: MLGFITRPPHQLLSLLCTGYRLPQISVLCTQPRPRAMAESSSTSWELPLVAVCQVTSTPNKQENFKTCAELVQEATRLGACLAFLPEAFDFIARNPAETLLLSEPLDGDLLGQYSQLARECGIWLSLGGFHERGQDWEQTQKIYNCHVLLNSKGSVVASYRKTHLCDVEIPGQGPMRESNYTMPGYALEPPVKTPAGKVGLAICYDMRFPELSLKLAQAGAEILTYPSAFGSVTGPAHWEVLLRARAIESQCYVIAAAQCGRHHETRASYGHSMVVDPWGTVVASCSEGPGLCLARIDLHFLQQMRQHLPVFQHRRPDLYGSLLPLS.

A mitochondrion-targeting transit peptide spans 1 to 36; it reads MLGFITRPPHQLLSLLCTGYRLPQISVLCTQPRPRA. The region spanning 47–299 is the CN hydrolase domain; sequence LPLVAVCQVT…PGLCLARIDL (253 aa). The Proton acceptor role is filled by glutamate 87. Lysine 162 functions as the Proton donor in the catalytic mechanism. Catalysis depends on cysteine 204, which acts as the Nucleophile.

This sequence belongs to the carbon-nitrogen hydrolase superfamily. NIT1/NIT2 family.

The protein localises to the mitochondrion. The protein resides in the cytoplasm. The enzyme catalyses N-(4-oxoglutaryl)-L-cysteinylglycine + H2O = L-cysteinylglycine + 2-oxoglutarate. Its function is as follows. Catalyzes the hydrolysis of the amide bond in N-(4-oxoglutarate)-L-cysteinylglycine (deaminated glutathione), a metabolite repair reaction to dispose of the harmful deaminated glutathione. Plays a role in cell growth and apoptosis: loss of expression promotes cell growth, resistance to DNA damage stress and increased incidence to NMBA-induced tumors. Has tumor suppressor properties that enhances the apoptotic responsiveness in cancer cells; this effect is additive to the tumor suppressor activity of FHIT. It is also a negative regulator of primary T-cells. The protein is Deaminated glutathione amidase (Nit1) of Rattus norvegicus (Rat).